Here is a 657-residue protein sequence, read N- to C-terminus: Conserved oligomeric Golgi complex subunit 6 (657 aa).

This sequence belongs to the COG6 family. Component of the conserved oligomeric Golgi complex which is composed of eight different subunits and is required for normal Golgi morphology and localization.

The protein resides in the golgi apparatus membrane. In terms of biological role, required for normal Golgi function. The protein is Conserved oligomeric Golgi complex subunit 6 (COG6) of Homo sapiens (Human).